The primary structure comprises 73 residues: Translation initiation factor IF-1 (73 aa).

The S1-like domain maps to 1-73 (MSEKEAGIEV…SRGRITYRDK (73 aa)).

The protein belongs to the IF-1 family. Component of the 30S ribosomal translation pre-initiation complex which assembles on the 30S ribosome in the order IF-2 and IF-3, IF-1 and N-formylmethionyl-tRNA(fMet); mRNA recruitment can occur at any time during PIC assembly.

The protein resides in the cytoplasm. Functionally, one of the essential components for the initiation of protein synthesis. Stabilizes the binding of IF-2 and IF-3 on the 30S subunit to which N-formylmethionyl-tRNA(fMet) subsequently binds. Helps modulate mRNA selection, yielding the 30S pre-initiation complex (PIC). Upon addition of the 50S ribosomal subunit IF-1, IF-2 and IF-3 are released leaving the mature 70S translation initiation complex. The polypeptide is Translation initiation factor IF-1 (Anaeromyxobacter dehalogenans (strain 2CP-C)).